The chain runs to 354 residues: MKIAVLLSGGVDSSVALYTMIQKGYKNIKCYYLKIWLEDELSYIGECPWEEDINYVEAVCTKFNVPYEIISLQDEYYKRVVTYAIEELKIGNTPSPDIFCNQRIKFGAFFDKINEHYDLIVTGHYAKIENKNNHYILKQAKDKIKDQSYFLSHLSREQISKLHFPLGDLLKTEIRQIAHKIDLPNKNRKDSQGICFLGKIKYDEFIKYHLGELKGNIIEQETGKILGTHNGYWFFTIGQRKGIKLSHGPWFVTEKDIQNNIIYISNSVNYLAQGKHQFLVHKTNWINKPVNNIDLSAKIRHGEKKIKCKIEMLKNDIIKVDLEEKDYGISPGQFCIFYQEDECLGGAQILQTLT.

ATP-binding positions include L6–S13 and L33. C100 serves as the catalytic Nucleophile. Cysteines 100 and 195 form a disulfide. G123 contacts ATP. The tract at residues K145–Q147 is interaction with tRNA. C195 acts as the Cysteine persulfide intermediate in catalysis.

This sequence belongs to the MnmA/TRMU family.

Its subcellular location is the cytoplasm. It catalyses the reaction S-sulfanyl-L-cysteinyl-[protein] + uridine(34) in tRNA + AH2 + ATP = 2-thiouridine(34) in tRNA + L-cysteinyl-[protein] + A + AMP + diphosphate + H(+). Functionally, catalyzes the 2-thiolation of uridine at the wobble position (U34) of tRNA, leading to the formation of s(2)U34. This chain is tRNA-specific 2-thiouridylase MnmA, found in Borrelia hermsii (strain HS1 / DAH).